A 439-amino-acid polypeptide reads, in one-letter code: IAA-amino acid hydrolase ILR1-like 2 (439 aa).

An N-terminal signal peptide occupies residues 1 to 21 (MALNKLLSLTFQLLLFLLSVS). Residues cysteine 137, histidine 139, glutamate 173, histidine 197, and histidine 397 each coordinate Mn(2+). Positions 436–439 (HEEL) match the Prevents secretion from ER motif.

The protein belongs to the peptidase M20 family. Monomer. The cofactor is Mn(2+). In terms of tissue distribution, expressed in leaves, stems, siliques, seeds and flowers. Detected in the distal tips of cotyledons and seedling leaves, hydathodes of leaves from mature plants, pollen, ovules and developing seeds.

It is found in the endoplasmic reticulum lumen. Its function is as follows. Hydrolyzes certain amino acid conjugates of the plant growth regulator indole-3-acetic acid (IAA), including IAA-Ala, IAA-Leu, IAA-Met, IAA-Phe, IAA-Ser, IAA-Thr, IAA-Tyr and IAA-Val. Is the most efficient enzyme of the ILL family for IAA-Ala. Not important for IAA-Leu hydrolysis in roots. May act with ILR1 to provide free IAA to germinating seedlings. The sequence is that of IAA-amino acid hydrolase ILR1-like 2 from Arabidopsis thaliana (Mouse-ear cress).